The primary structure comprises 291 residues: Mitochondrial fission factor (291 aa).

The Cytoplasmic segment spans residues 1 to 271 (MAEISRIQYE…ENKERAKREM (271 aa)). Thr89 is modified (phosphothreonine). The disordered stretch occupies residues 106–134 (LERPLPTPQSEESRAVGRLKRERSMSENA). Residues Ser129, Ser131, and Ser146 each carry the phosphoserine modification. Thr149 carries the phosphothreonine modification. A phosphoserine mark is found at Ser151, Ser178, Ser182, and Ser244. The stretch at 240-271 (VDAASLRRQIIKLNRRLQLLEEENKERAKREM) forms a coiled coil. A helical; Anchor for type IV membrane protein membrane pass occupies residues 272 to 289 (VMYSITVAFWLLNSWLWF). Over 290–291 (RR) the chain is Mitochondrial intermembrane.

It belongs to the Tango11 family. In terms of assembly, homodimer. Interacts with DNM1L. Interacts with C11orf65/MFI; the interaction inhibits MFF interaction with DNM1L.

The protein resides in the mitochondrion outer membrane. Its subcellular location is the peroxisome. It localises to the cytoplasmic vesicle. The protein localises to the secretory vesicle. It is found in the synaptic vesicle. Plays a role in mitochondrial and peroxisomal fission. Promotes the recruitment and association of the fission mediator dynamin-related protein 1 (DNM1L) to the mitochondrial surface. May be involved in regulation of synaptic vesicle membrane dynamics by recruitment of DNM1L to clathrin-containing vesicles. The protein is Mitochondrial fission factor (Mff) of Mus musculus (Mouse).